The sequence spans 535 residues: 2-isopropylmalate synthase (535 aa).

The Pyruvate carboxyltransferase domain occupies 13–274 (VLIFDTTLRD…YFNPFLGRPP (262 aa)). Mn(2+) is bound by residues Asp-22, His-213, His-215, and Asn-249. Residues 414 to 535 (QLEFVQVSCG…LEQRALHPQA (122 aa)) form a regulatory domain region.

It belongs to the alpha-IPM synthase/homocitrate synthase family. LeuA type 1 subfamily. In terms of assembly, homodimer. Mn(2+) serves as cofactor.

It localises to the cytoplasm. It catalyses the reaction 3-methyl-2-oxobutanoate + acetyl-CoA + H2O = (2S)-2-isopropylmalate + CoA + H(+). The protein operates within amino-acid biosynthesis; L-leucine biosynthesis; L-leucine from 3-methyl-2-oxobutanoate: step 1/4. Catalyzes the condensation of the acetyl group of acetyl-CoA with 3-methyl-2-oxobutanoate (2-ketoisovalerate) to form 3-carboxy-3-hydroxy-4-methylpentanoate (2-isopropylmalate). The chain is 2-isopropylmalate synthase from Thermosynechococcus vestitus (strain NIES-2133 / IAM M-273 / BP-1).